The primary structure comprises 277 residues: Insulin-induced gene 1 protein (277 aa).

The Cytoplasmic segment spans residues Met1 to Leu84. Positions His51–Ala66 are enriched in low complexity. The interval His51 to Gly73 is disordered. Residues Leu85–Ile107 traverse the membrane as a helical segment. The Lumenal segment spans residues Gln108–Ala126. A helical transmembrane segment spans residues Trp127 to Tyr144. At Pro145–Arg159 the chain is on the cytoplasmic side. Residues Lys156 and Lys158 each participate in a glycyl lysine isopeptide (Lys-Gly) (interchain with G-Cter in ubiquitin) cross-link. Residues Glu160 to Asp182 form a helical membrane-spanning segment. At Phe183–Asn185 the chain is on the lumenal side. Residues Asn186–Phe204 form a helical membrane-spanning segment. Residues Asp205–Ser209 lie on the Cytoplasmic side of the membrane. At Ser207 the chain carries Phosphoserine; by PCK1. A helical transmembrane segment spans residues Gly210–Asn231. Topologically, residues Gly232–Arg245 are lumenal. Residues Ser246–Gly263 form a helical membrane-spanning segment. Over Arg264–Asp277 the chain is Cytoplasmic. Positions Pro271–Asp277 match the KxHxx motif.

The protein belongs to the INSIG family. As to quaternary structure, interacts with SCAP; interaction is direct and only takes place in the presence of sterols; it prevents interaction between SCAP and the coat protein complex II (COPII). Associates with the SCAP-SREBP complex (composed of SCAP and SREBF1/SREBP1 or SREBF2/SREBP2); association is mediated via its interaction with SCAP and only takes place in the presence of sterols. Interaction with SCAP is mutually exclusive with PAQR3. Interacts with HMGCR (via its SSD); the interaction, accelerated by sterols, leads to the recruitment of HMGCR to AMFR/gp78 for its ubiquitination by the sterol-mediated ERAD pathway. Interacts with AMFR/gp78 (via its membrane domain); the interaction recruits HMCR at the ER membrane for its ubiquitination and degradation by the sterol-mediated ERAD pathway. Interacts with SOAT2/ACAT2; leading to promote recruitment of AMFR/gp78 and subsequent ubiquitination of SOAT2/ACAT2. Interacts with RNF139. Interacts with RNF145. Post-translationally, phosphorylation at Ser-207 by PCK1 reduces binding to oxysterol, disrupting the interaction between INSIG1 and SCAP, thereby promoting nuclear translocation of SREBP proteins (SREBF1/SREBP1 or SREBF2/SREBP2) and subsequent transcription of downstream lipogenesis-related genes. Ubiquitinated by AMFR/gp78 in response to sterol deprivation, leading to its degradation: when the SCAP-SREBP complex becomes dissociated from INSIG1, INSIG1 is then ubiquitinated and degraded in proteasomes. Although ubiquitination is required for rapid INSIG1 degradation, it is not required for release of the SCAP-SREBP complex. Ubiquitinated by RNF139. As to expression, expressed in all tissues tested with highest expression in the liver.

Its subcellular location is the endoplasmic reticulum membrane. Its function is as follows. Oxysterol-binding protein that mediates feedback control of cholesterol synthesis by controlling both endoplasmic reticulum to Golgi transport of SCAP and degradation of HMGCR. Acts as a negative regulator of cholesterol biosynthesis by mediating the retention of the SCAP-SREBP complex in the endoplasmic reticulum, thereby blocking the processing of sterol regulatory element-binding proteins (SREBPs) SREBF1/SREBP1 and SREBF2/SREBP2. Binds oxysterol, including 25-hydroxycholesterol, regulating interaction with SCAP and retention of the SCAP-SREBP complex in the endoplasmic reticulum. In presence of oxysterol, interacts with SCAP, retaining the SCAP-SREBP complex in the endoplasmic reticulum, thereby preventing SCAP from escorting SREBF1/SREBP1 and SREBF2/SREBP2 to the Golgi. Sterol deprivation or phosphorylation by PCK1 reduce oxysterol-binding, disrupting the interaction between INSIG1 and SCAP, thereby promoting Golgi transport of the SCAP-SREBP complex, followed by processing and nuclear translocation of SREBF1/SREBP1 and SREBF2/SREBP2. Also regulates cholesterol synthesis by regulating degradation of HMGCR: initiates the sterol-mediated ubiquitin-mediated endoplasmic reticulum-associated degradation (ERAD) of HMGCR via recruitment of the reductase to the ubiquitin ligases AMFR/gp78 and/or RNF139. Also regulates degradation of SOAT2/ACAT2 when the lipid levels are low: initiates the ubiquitin-mediated degradation of SOAT2/ACAT2 via recruitment of the ubiquitin ligases AMFR/gp78. The polypeptide is Insulin-induced gene 1 protein (Homo sapiens (Human)).